A 107-amino-acid chain; its full sequence is Nucleoid-associated protein Lferr_1592 (107 aa).

It belongs to the YbaB/EbfC family. Homodimer.

Its subcellular location is the cytoplasm. It is found in the nucleoid. In terms of biological role, binds to DNA and alters its conformation. May be involved in regulation of gene expression, nucleoid organization and DNA protection. The sequence is that of Nucleoid-associated protein Lferr_1592 from Acidithiobacillus ferrooxidans (strain ATCC 53993 / BNL-5-31) (Leptospirillum ferrooxidans (ATCC 53993)).